A 491-amino-acid chain; its full sequence is Leucine aminopeptidase 1 (491 aa).

Residues Lys-252 and Asp-257 each coordinate Zn(2+). Lys-264 is an active-site residue. Positions 275, 334, and 336 each coordinate Zn(2+). Arg-338 is a catalytic residue.

It belongs to the peptidase M17 family. Zn(2+) serves as cofactor. In terms of tissue distribution, expressed in the buccal cavity, pharynx, anterior gut and rectum.

The catalysed reaction is Release of an N-terminal amino acid, Xaa-|-Yaa-, in which Xaa is preferably Leu, but may be other amino acids including Pro although not Arg or Lys, and Yaa may be Pro. Amino acid amides and methyl esters are also readily hydrolyzed, but rates on arylamides are exceedingly low.. Functionally, probably acts as a digestive enzyme. The sequence is that of Leucine aminopeptidase 1 (lap-1) from Caenorhabditis elegans.